The following is a 181-amino-acid chain: Histone deacetylase complex subunit SAP30L-A (181 aa).

Disulfide bonds link C26–C27 and C35–C71. The Atypical zinc finger occupies 26 to 74 (CCLIDGGERCPRPAGNASFSKRVQKSISQKKLKLDIDKNVRHLYICDFH). Positions 82 to 103 (RNKRKRKTSDDGGDSPEHETDI) are disordered. Residues 83-88 (NKRKRK) carry the Nuclear localization signal (NLS) motif. The interval 85–87 (RKR) is important for DNA and phosphoinositide binding.

This sequence belongs to the SAP30 family. In terms of assembly, interacts with components of the histone deacetylase complex sin3a, hdac1 and hdac2. Binds histones and nucleosomes.

It localises to the nucleus. The protein localises to the nucleolus. Functions as a transcription repressor, probably via its interaction with histone deacetylase complexes. Involved in the functional recruitment of the class 1 Sin3-histone deacetylase complex (HDAC) to the nucleolus. Binds DNA, apparently without sequence-specificity, and bends bound double-stranded DNA. Binds phosphoinositol phosphates (phosphoinositol 3-phosphate, phosphoinositol 4-phosphate and phosphoinositol 5-phosphate) via the same basic sequence motif that mediates DNA binding and nuclear import. This is Histone deacetylase complex subunit SAP30L-A (sap30l-a) from Xenopus laevis (African clawed frog).